The primary structure comprises 516 residues: uncharacterized protein (516 aa).

2 PFTB repeats span residues R45–D86 and D401–E443.

This is an uncharacterized protein from Sinorhizobium fredii (strain NBRC 101917 / NGR234).